We begin with the raw amino-acid sequence, 366 residues long: tRNA-specific 2-thiouridylase MnmA (366 aa).

Residues 10 to 17 and Ile36 contribute to the ATP site; that span reads GLSGGVDS. Residue Cys98 is the Nucleophile of the active site. Cys98 and Cys194 are joined by a disulfide. Gly122 lines the ATP pocket. The interval 144–146 is interaction with tRNA; it reads KDQ. Cys194 serves as the catalytic Cysteine persulfide intermediate. The segment at 303-304 is interaction with tRNA; the sequence is RY.

Belongs to the MnmA/TRMU family.

The protein localises to the cytoplasm. The enzyme catalyses S-sulfanyl-L-cysteinyl-[protein] + uridine(34) in tRNA + AH2 + ATP = 2-thiouridine(34) in tRNA + L-cysteinyl-[protein] + A + AMP + diphosphate + H(+). Catalyzes the 2-thiolation of uridine at the wobble position (U34) of tRNA, leading to the formation of s(2)U34. The chain is tRNA-specific 2-thiouridylase MnmA from Chlorobaculum tepidum (strain ATCC 49652 / DSM 12025 / NBRC 103806 / TLS) (Chlorobium tepidum).